We begin with the raw amino-acid sequence, 97 residues long: Co-chaperonin GroES (97 aa).

It belongs to the GroES chaperonin family. In terms of assembly, heptamer of 7 subunits arranged in a ring. Interacts with the chaperonin GroEL.

Its subcellular location is the cytoplasm. Its function is as follows. Together with the chaperonin GroEL, plays an essential role in assisting protein folding. The GroEL-GroES system forms a nano-cage that allows encapsulation of the non-native substrate proteins and provides a physical environment optimized to promote and accelerate protein folding. GroES binds to the apical surface of the GroEL ring, thereby capping the opening of the GroEL channel. The protein is Co-chaperonin GroES of Tolumonas auensis (strain DSM 9187 / NBRC 110442 / TA 4).